We begin with the raw amino-acid sequence, 412 residues long: Multifunctional CCA protein (412 aa).

ATP is bound by residues Gly8 and Arg11. CTP is bound by residues Gly8 and Arg11. Positions 21 and 23 each coordinate Mg(2+). ATP-binding residues include Arg92, Arg138, and Arg141. Positions 92, 138, and 141 each coordinate CTP. The region spanning 227–328 (TGIHTMMTVA…IKLFYAIDVW (102 aa)) is the HD domain.

This sequence belongs to the tRNA nucleotidyltransferase/poly(A) polymerase family. Bacterial CCA-adding enzyme type 1 subfamily. In terms of assembly, monomer. Can also form homodimers and oligomers. The cofactor is Mg(2+). Ni(2+) is required as a cofactor.

The enzyme catalyses a tRNA precursor + 2 CTP + ATP = a tRNA with a 3' CCA end + 3 diphosphate. It catalyses the reaction a tRNA with a 3' CCA end + 2 CTP + ATP = a tRNA with a 3' CCACCA end + 3 diphosphate. Functionally, catalyzes the addition and repair of the essential 3'-terminal CCA sequence in tRNAs without using a nucleic acid template. Adds these three nucleotides in the order of C, C, and A to the tRNA nucleotide-73, using CTP and ATP as substrates and producing inorganic pyrophosphate. tRNA 3'-terminal CCA addition is required both for tRNA processing and repair. Also involved in tRNA surveillance by mediating tandem CCA addition to generate a CCACCA at the 3' terminus of unstable tRNAs. While stable tRNAs receive only 3'-terminal CCA, unstable tRNAs are marked with CCACCA and rapidly degraded. This is Multifunctional CCA protein from Baumannia cicadellinicola subsp. Homalodisca coagulata.